A 288-amino-acid chain; its full sequence is Stress response protein YhaX (288 aa).

In Bacillus subtilis (strain 168), this protein is Stress response protein YhaX (yhaX).